The primary structure comprises 398 residues: Putative transposase y4qJ (398 aa).

The protein belongs to the transposase 32 family.

This chain is Putative transposase y4qJ, found in Sinorhizobium fredii (strain NBRC 101917 / NGR234).